The primary structure comprises 421 residues: uncharacterized protein (421 aa).

N6-(pyridoxal phosphate)lysine is present on Lys249.

Belongs to the class-I pyridoxal-phosphate-dependent aminotransferase family. Requires pyridoxal 5'-phosphate as cofactor.

The protein localises to the cytoplasm. This is an uncharacterized protein from Schizosaccharomyces pombe (strain 972 / ATCC 24843) (Fission yeast).